Consider the following 256-residue polypeptide: Probable tRNA(His) guanylyltransferase (256 aa).

Residues aspartate 29, glycine 30, and aspartate 76 each coordinate Mg(2+). GTP-binding positions include aspartate 29–histidine 34 and serine 75–aspartate 76.

This sequence belongs to the tRNA(His) guanylyltransferase family. The cofactor is Mg(2+).

It is found in the cytoplasm. It carries out the reaction a 5'-end ribonucleotide-tRNA(His) + GTP + ATP + H2O = a 5'-end phospho-guanosine-ribonucleotide-tRNA(His) + AMP + 2 diphosphate + H(+). Functionally, adds a GMP to the 5'-end of tRNA(His) after transcription and RNase P cleavage. The protein is Probable tRNA(His) guanylyltransferase (thg1) of Dictyostelium discoideum (Social amoeba).